A 658-amino-acid polypeptide reads, in one-letter code: Threonine--tRNA ligase (658 aa).

In terms of domain architecture, TGS spans M1–T64. The tract at residues D246–P548 is catalytic. Residues C343, H394, and H525 each contribute to the Zn(2+) site.

The protein belongs to the class-II aminoacyl-tRNA synthetase family. As to quaternary structure, homodimer. Zn(2+) serves as cofactor.

The protein localises to the cytoplasm. It carries out the reaction tRNA(Thr) + L-threonine + ATP = L-threonyl-tRNA(Thr) + AMP + diphosphate + H(+). Catalyzes the attachment of threonine to tRNA(Thr) in a two-step reaction: L-threonine is first activated by ATP to form Thr-AMP and then transferred to the acceptor end of tRNA(Thr). Also edits incorrectly charged L-seryl-tRNA(Thr). This is Threonine--tRNA ligase from Brucella abortus (strain S19).